Reading from the N-terminus, the 379-residue chain is Chorismate synthase (379 aa).

NADP(+) is bound by residues Arg48 and Arg54. FMN-binding positions include 125-127, 241-242, Gly286, 301-305, and Arg327; these read RSS, NA, and KPTSS.

Belongs to the chorismate synthase family. As to quaternary structure, homotetramer. The cofactor is FMNH2.

The enzyme catalyses 5-O-(1-carboxyvinyl)-3-phosphoshikimate = chorismate + phosphate. It functions in the pathway metabolic intermediate biosynthesis; chorismate biosynthesis; chorismate from D-erythrose 4-phosphate and phosphoenolpyruvate: step 7/7. Its function is as follows. Catalyzes the anti-1,4-elimination of the C-3 phosphate and the C-6 proR hydrogen from 5-enolpyruvylshikimate-3-phosphate (EPSP) to yield chorismate, which is the branch point compound that serves as the starting substrate for the three terminal pathways of aromatic amino acid biosynthesis. This reaction introduces a second double bond into the aromatic ring system. This is Chorismate synthase from Rhodospirillum centenum (strain ATCC 51521 / SW).